The chain runs to 469 residues: Reticulon-2 (469 aa).

2 disordered regions span residues 1 to 180 and 201 to 238; these read MGQV…EASE and LTPQ…NGEG. Residues 14–25 are compositionally biased toward low complexity; the sequence is APSTASSTPDST. Residues 32 to 43 are compositionally biased toward basic and acidic residues; that stretch reads SDFRELHTAREF. S44 is modified (phosphoserine). Positions 135 to 144 are enriched in basic and acidic residues; sequence RPLEELRLRL. 2 stretches are compositionally biased toward polar residues: residues 159 to 168 and 203 to 226; these read DSATSSSTPL and PQLS…QDLN. The Reticulon domain maps to 270-469; it reads VADLLYWKDT…SVSGSKAKAE (200 aa). The next 2 membrane-spanning stretches (helical) occupy residues 293–313 and 388–408; these read LLCL…LLGL and LLFY…LVIL.

As to quaternary structure, interacts with SPAST. Interacts with BACE1. Interacts (via first transmembrane domain) with ARL6IP5/GTRAP3-18. Interacts (via N-terminus) with SLC1A1/EAAC1; the interaction promotes cell surface expression of SLC1A1. As to expression, expressed in brain and spinal cord (at protein level). In the embryonic brain cortex, expressed in neurons but not in astrocytes (at protein level).

It is found in the endoplasmic reticulum membrane. The protein localises to the sarcoplasmic reticulum membrane. Its subcellular location is the cell membrane. It localises to the sarcolemma. The protein resides in the T-tubule. It is found in the cytoplasm. The protein localises to the myofibril. Its subcellular location is the sarcomere. It localises to the z line. The protein resides in the cytoskeleton. In terms of biological role, inhibits amyloid precursor protein processing, probably by blocking BACE1 activity. Enhances trafficking of the glutamate transporter SLC1A1/EAAC1 from the endoplasmic reticulum to the cell surface. Plays a role in the translocation of SLC2A4/GLUT4 from intracellular membranes to the cell membrane which facilitates the uptake of glucose into the cell. The protein is Reticulon-2 of Rattus norvegicus (Rat).